A 100-amino-acid polypeptide reads, in one-letter code: Urease subunit gamma (100 aa).

It belongs to the urease gamma subunit family. In terms of assembly, heterotrimer of UreA (gamma), UreB (beta) and UreC (alpha) subunits. Three heterotrimers associate to form the active enzyme.

It localises to the cytoplasm. The catalysed reaction is urea + 2 H2O + H(+) = hydrogencarbonate + 2 NH4(+). It functions in the pathway nitrogen metabolism; urea degradation; CO(2) and NH(3) from urea (urease route): step 1/1. In Burkholderia cenocepacia (strain ATCC BAA-245 / DSM 16553 / LMG 16656 / NCTC 13227 / J2315 / CF5610) (Burkholderia cepacia (strain J2315)), this protein is Urease subunit gamma.